We begin with the raw amino-acid sequence, 144 residues long: Large ribosomal subunit protein uL15 (144 aa).

Residues 1 to 57 are disordered; sequence MLLNTLSPAAGSKHAPKRLGRGVGSGLGKTGGRGHKGQKSRSGGKVRPGFEGGQMPL. Residues 21–31 show a composition bias toward gly residues; the sequence is RGVGSGLGKTG. Residues 32 to 44 show a composition bias toward basic residues; it reads GRGHKGQKSRSGG.

The protein belongs to the universal ribosomal protein uL15 family. In terms of assembly, part of the 50S ribosomal subunit.

Binds to the 23S rRNA. The polypeptide is Large ribosomal subunit protein uL15 (Vibrio cholerae serotype O1 (strain ATCC 39315 / El Tor Inaba N16961)).